The primary structure comprises 108 residues: Large ribosomal subunit protein eL30 (108 aa).

It belongs to the eukaryotic ribosomal protein eL30 family.

This Saccharolobus solfataricus (strain ATCC 35092 / DSM 1617 / JCM 11322 / P2) (Sulfolobus solfataricus) protein is Large ribosomal subunit protein eL30 (rpl30e).